The primary structure comprises 309 residues: Homoserine kinase (309 aa).

91 to 101 (PIGSGLGSSAC) provides a ligand contact to ATP.

This sequence belongs to the GHMP kinase family. Homoserine kinase subfamily.

Its subcellular location is the cytoplasm. It carries out the reaction L-homoserine + ATP = O-phospho-L-homoserine + ADP + H(+). It functions in the pathway amino-acid biosynthesis; L-threonine biosynthesis; L-threonine from L-aspartate: step 4/5. In terms of biological role, catalyzes the ATP-dependent phosphorylation of L-homoserine to L-homoserine phosphate. The protein is Homoserine kinase of Erwinia tasmaniensis (strain DSM 17950 / CFBP 7177 / CIP 109463 / NCPPB 4357 / Et1/99).